The following is a 583-amino-acid chain: RuBisCO large subunit-binding protein subunit alpha, chloroplastic (583 aa).

The segment covering methionine 1–cysteine 14 has biased composition (polar residues). The tract at residues methionine 1 to arginine 35 is disordered. The N-terminal 45 residues, methionine 1–alanine 45, are a transit peptide targeting the chloroplast. A compositionally biased stretch (low complexity) spans serine 15 to arginine 31. Phosphoserine is present on serine 89.

It belongs to the chaperonin (HSP60) family. Oligomer of probably six alpha and six beta subunits.

It is found in the plastid. Its subcellular location is the chloroplast. In terms of biological role, this protein binds RuBisCO small and large subunits and is implicated in the assembly of the enzyme oligomer. The chain is RuBisCO large subunit-binding protein subunit alpha, chloroplastic from Brassica napus (Rape).